A 749-amino-acid polypeptide reads, in one-letter code: ATP-dependent zinc metalloprotease FtsH 3 (749 aa).

Residues 1–17 (MTGDPPERRSNGDRLPA) show a composition bias toward basic and acidic residues. Positions 1–67 (MTGDPPERRS…GRNGGGMRPF (67 aa)) are disordered. At 1 to 75 (MTGDPPERRS…PFRFPGGRWG (75 aa)) the chain is on the cytoplasmic side. Residues 76–96 (ILVFILVLLGLNWWISSNALA) traverse the membrane as a helical segment. Residues 97–186 (PSERVRVPYS…NASPADNGPS (90 aa)) are Extracellular-facing. Residues 187–207 (LLVSILLGFGPVILIIALFVF) traverse the membrane as a helical segment. Residues 208–749 (LSRRMAGAAG…LGGSVRAGDA (542 aa)) are Cytoplasmic-facing. Residue 281–288 (GQPGTGKT) participates in ATP binding. Histidine 504 is a Zn(2+) binding site. Glutamate 505 is a catalytic residue. Residues histidine 508 and aspartate 580 each coordinate Zn(2+). The segment covering 679–689 (GLEHMRPERVE) has biased composition (basic and acidic residues). The tract at residues 679–749 (GLEHMRPERV…LGGSVRAGDA (71 aa)) is disordered.

The protein in the central section; belongs to the AAA ATPase family. It in the C-terminal section; belongs to the peptidase M41 family. Homohexamer. The cofactor is Zn(2+).

It localises to the cell membrane. Functionally, acts as a processive, ATP-dependent zinc metallopeptidase for both cytoplasmic and membrane proteins. Plays a role in the quality control of integral membrane proteins. The sequence is that of ATP-dependent zinc metalloprotease FtsH 3 from Conexibacter woesei (strain DSM 14684 / CCUG 47730 / CIP 108061 / JCM 11494 / NBRC 100937 / ID131577).